Reading from the N-terminus, the 357-residue chain is UDP-N-acetylglucosamine--N-acetylmuramyl-(pentapeptide) pyrophosphoryl-undecaprenol N-acetylglucosamine transferase (357 aa).

UDP-N-acetyl-alpha-D-glucosamine contacts are provided by residues 15-17 (TGG), Asn-124, Arg-165, Ser-191, and Gln-285.

This sequence belongs to the glycosyltransferase 28 family. MurG subfamily.

It localises to the cell inner membrane. It catalyses the reaction di-trans,octa-cis-undecaprenyl diphospho-N-acetyl-alpha-D-muramoyl-L-alanyl-D-glutamyl-meso-2,6-diaminopimeloyl-D-alanyl-D-alanine + UDP-N-acetyl-alpha-D-glucosamine = di-trans,octa-cis-undecaprenyl diphospho-[N-acetyl-alpha-D-glucosaminyl-(1-&gt;4)]-N-acetyl-alpha-D-muramoyl-L-alanyl-D-glutamyl-meso-2,6-diaminopimeloyl-D-alanyl-D-alanine + UDP + H(+). It participates in cell wall biogenesis; peptidoglycan biosynthesis. Functionally, cell wall formation. Catalyzes the transfer of a GlcNAc subunit on undecaprenyl-pyrophosphoryl-MurNAc-pentapeptide (lipid intermediate I) to form undecaprenyl-pyrophosphoryl-MurNAc-(pentapeptide)GlcNAc (lipid intermediate II). This chain is UDP-N-acetylglucosamine--N-acetylmuramyl-(pentapeptide) pyrophosphoryl-undecaprenol N-acetylglucosamine transferase, found in Microcystis aeruginosa (strain NIES-843 / IAM M-2473).